Consider the following 454-residue polypeptide: Phosphoglucosamine mutase (454 aa).

Ser-101 acts as the Phosphoserine intermediate in catalysis. Residues Ser-101, Asp-243, Asp-245, and Asp-247 each coordinate Mg(2+). Ser-101 carries the phosphoserine modification.

Belongs to the phosphohexose mutase family. Mg(2+) is required as a cofactor. Post-translationally, activated by phosphorylation.

The enzyme catalyses alpha-D-glucosamine 1-phosphate = D-glucosamine 6-phosphate. Catalyzes the conversion of glucosamine-6-phosphate to glucosamine-1-phosphate. The sequence is that of Phosphoglucosamine mutase from Citrifermentans bemidjiense (strain ATCC BAA-1014 / DSM 16622 / JCM 12645 / Bem) (Geobacter bemidjiensis).